Reading from the N-terminus, the 224-residue chain is Uracil-DNA glycosylase (224 aa).

The active-site Proton acceptor is Asp64.

It belongs to the uracil-DNA glycosylase (UDG) superfamily. UNG family.

Its subcellular location is the cytoplasm. It catalyses the reaction Hydrolyzes single-stranded DNA or mismatched double-stranded DNA and polynucleotides, releasing free uracil.. Functionally, excises uracil residues from the DNA which can arise as a result of misincorporation of dUMP residues by DNA polymerase or due to deamination of cytosine. This is Uracil-DNA glycosylase from Clostridioides difficile (strain 630) (Peptoclostridium difficile).